A 331-amino-acid chain; its full sequence is Pectinesterase (331 aa).

The first 17 residues, 1-17 (MVKSVLASALFAVSALA), serve as a signal peptide directing secretion. Gln139 is a substrate binding site. The active-site Proton donor is the Asp162. Catalysis depends on Asp183, which acts as the Nucleophile. Substrate-binding residues include Arg248 and Trp250.

This sequence belongs to the pectinesterase family.

The protein localises to the secreted. The enzyme catalyses [(1-&gt;4)-alpha-D-galacturonosyl methyl ester](n) + n H2O = [(1-&gt;4)-alpha-D-galacturonosyl](n) + n methanol + n H(+). Its pathway is glycan metabolism; pectin degradation; 2-dehydro-3-deoxy-D-gluconate from pectin: step 1/5. Involved in maceration and soft-rotting of plant tissue. The polypeptide is Pectinesterase (pme1) (Aspergillus aculeatus).